The primary structure comprises 221 residues: Probable septum site-determining protein MinC (221 aa).

It belongs to the MinC family. As to quaternary structure, interacts with MinD and FtsZ.

Functionally, cell division inhibitor that blocks the formation of polar Z ring septums. Rapidly oscillates between the poles of the cell to destabilize FtsZ filaments that have formed before they mature into polar Z rings. Prevents FtsZ polymerization. In Shewanella frigidimarina (strain NCIMB 400), this protein is Probable septum site-determining protein MinC.